The primary structure comprises 1850 residues: Chitin synthase V (1850 aa).

Residues 1-27 form a disordered region; the sequence is MASTLPPLGGGNGGPHTQHSLPSLPAH. The region spanning 1–779 is the Myosin motor domain; it reads MASTLPPLGG…EIAGLVDGSA (779 aa). 105–112 contributes to the ATP binding site; it reads GESGSGKS. N-linked (GlcNAc...) asparagine glycosylation is found at N245, N290, N427, N481, and N558. Residues 289–309 form a disordered region; sequence NNTSATGDDSGGFSHEGGQTS. The tract at residues 593 to 647 is disordered; it reads SKPMRAPSVMSRKGGRGRGIASQRRQQESNLFDSGNTHAESRSPKGGNKGGIDQG. The span at 620–630 shows a compositional bias: polar residues; that stretch reads ESNLFDSGNTH. Residues 656–680 are actin-binding; it reads LDNVQKAVTDPGTNAYFVFCLKPND. 2 helical membrane passes run 884–904 and 923–943; these read WVFT…RWIG and MLIW…PMLI. The region spanning 947–1006 is the Cytochrome b5 heme-binding domain; the sequence is QNVFSAAELSSHNGKDGNSAYVSIRGHVIDLGSFADRHYPSFVSRKTMLNYAGMDVSSLF. Residues N1033, N1058, and N1186 are each glycosylated (N-linked (GlcNAc...) asparagine). Residues 1196 to 1216 form a helical membrane-spanning segment; that stretch reads LVLAVSILLVSVIAFKFFAAL. N1453 and N1559 each carry an N-linked (GlcNAc...) asparagine glycan. A run of 4 helical transmembrane segments spans residues 1568 to 1588, 1590 to 1610, 1617 to 1637, and 1644 to 1664; these read LIPM…VVFI, LLST…IVLV, VPIT…IIFI, and MVGW…GLPL. Residue N1767 is glycosylated (N-linked (GlcNAc...) asparagine). The 51-residue stretch at 1800–1850 folds into the DEK-C domain; the sequence is LPSDDALLAEIRDILKTADLMTVTKKGIKQELERRFDVPLDAKRAYINSGK.

This sequence in the N-terminal section; belongs to the TRAFAC class myosin-kinesin ATPase superfamily. Myosin family. In the C-terminal section; belongs to the chitin synthase family. Class V subfamily. As to expression, expressed in conidia and during appressorium formation.

The protein resides in the cell membrane. The protein localises to the cell septum. Its subcellular location is the cell tip. It catalyses the reaction [(1-&gt;4)-N-acetyl-beta-D-glucosaminyl](n) + UDP-N-acetyl-alpha-D-glucosamine = [(1-&gt;4)-N-acetyl-beta-D-glucosaminyl](n+1) + UDP + H(+). Its function is as follows. Polymerizes chitin, a structural polymer of the cell wall and septum, by transferring the sugar moiety of UDP-GlcNAc to the non-reducing end of the growing chitin polymer. Contributes to the production of conidia and the ability of fungal conidia to germinate. Involved in the fungal cell wall integrity and the ability of conidia to withstand biophysical pressure. Required for appressorium formation and evasion of insect cellular and/or humoral defenses, promoting the fungal dimorphic transition to the production of hyphal bodies that occurs within hosts, and ultimately to virulence. This Metarhizium acridum (strain CQMa 102) protein is Chitin synthase V.